The sequence spans 118 residues: Ribosome-binding factor A (118 aa).

Belongs to the RbfA family. As to quaternary structure, monomer. Binds 30S ribosomal subunits, but not 50S ribosomal subunits or 70S ribosomes.

The protein localises to the cytoplasm. Functionally, one of several proteins that assist in the late maturation steps of the functional core of the 30S ribosomal subunit. Associates with free 30S ribosomal subunits (but not with 30S subunits that are part of 70S ribosomes or polysomes). Required for efficient processing of 16S rRNA. May interact with the 5'-terminal helix region of 16S rRNA. The chain is Ribosome-binding factor A from Geobacter metallireducens (strain ATCC 53774 / DSM 7210 / GS-15).